The following is a 607-amino-acid chain: MNLEELKKRQEKIRNFSIIAHIDHGKSTLADRILEKTETVSSREMQAQLLDSMDLERERGITIKLNAIELNYTAKDGETYIFHLIDTPGHVDFTYEVSRSLAACEGAILVVDAAQGIEAQTLANVYLALDNDLEIMPVINKIDLPAADPERVRTEIEDVIGLDASEAVLASAKAGIGIEEILEQIVEKVPAPTGDVTAPLKALIFDSVYDAYRGVILQVRVMDGVVKPGDKIQLMSNGKTFDVTEVGIFTPKAVGRDFLATGDVGYIAASIKTVQDTRVGDTVTLATNPAAEPLHGYKQMNPMVFAGLYPIESNKYNDLREALEKLQLNDASLQFEPETSQALGFGFRCGFLGLLHMDVIQERLEREFNIDLIMTAPSVIYKVNLTDGESMDVSNPSEFPDPTKIATIEEPYVKAQIMVPQEFVGAVMELAQRKRGDFVTMDYIDDNRVNVIYQIPLAEIVFDFFDKLKSSTRGYASFDYELSEYRPSKLVKMDILLNGDKVDALSFIVHKDFAYERGKLIVDKLKKIIPRQQFEVPIQAAIGHKIVARTDIKALRKNVLAKCYGGDVSRKRKLLEKQKAGKKRMKSIGSVEVPQEAFLSVLSMDEE.

A tr-type G domain is found at 11-193 (EKIRNFSIIA…QIVEKVPAPT (183 aa)). GTP-binding positions include 23 to 28 (DHGKST) and 140 to 143 (NKID).

This sequence belongs to the TRAFAC class translation factor GTPase superfamily. Classic translation factor GTPase family. LepA subfamily.

It localises to the cell membrane. The enzyme catalyses GTP + H2O = GDP + phosphate + H(+). In terms of biological role, required for accurate and efficient protein synthesis under certain stress conditions. May act as a fidelity factor of the translation reaction, by catalyzing a one-codon backward translocation of tRNAs on improperly translocated ribosomes. Back-translocation proceeds from a post-translocation (POST) complex to a pre-translocation (PRE) complex, thus giving elongation factor G a second chance to translocate the tRNAs correctly. Binds to ribosomes in a GTP-dependent manner. This Streptococcus pneumoniae (strain Hungary19A-6) protein is Elongation factor 4.